Reading from the N-terminus, the 932-residue chain is Protocadherin gamma-A12 (932 aa).

A signal peptide spans 1–29 (MIPARLHRDYKGLVLLGILLGTLWETGCT). 6 Cadherin domains span residues 30 to 133 (QIRY…APYF), 134 to 242 (RESE…APAF), 243 to 347 (AQPE…APEV), 348 to 452 (VLTS…PPVF), 453 to 562 (PQAS…APEI), and 570 to 683 (DGST…SPAN). Residues 30–692 (QIRYSVPEEL…NSETSDLTLY (663 aa)) are Extracellular-facing. Asn-265, Asn-419, and Asn-545 each carry an N-linked (GlcNAc...) asparagine glycan. Residues 693 to 713 (LVVAVAAVSCVFLAFVILLLA) traverse the membrane as a helical segment. Residues 714–932 (LRLRRWHKSR…KKKSGKKEKK (219 aa)) lie on the Cytoplasmic side of the membrane. Disordered regions lie at residues 803 to 841 (GHGL…WPNN) and 902 to 932 (ATLT…KEKK). The span at 816–841 (WRFSQAQRPGTSGSQNGDDTGTWPNN) shows a compositional bias: polar residues. Residues 922–932 (NKKKSGKKEKK) show a composition bias toward basic residues.

Its subcellular location is the cell membrane. Functionally, potential calcium-dependent cell-adhesion protein. May be involved in the establishment and maintenance of specific neuronal connections in the brain. In Pan troglodytes (Chimpanzee), this protein is Protocadherin gamma-A12 (PCDHGA12).